A 29-amino-acid polypeptide reads, in one-letter code: Kalata-B11 (29 aa).

The cyclopeptide (Gly-Asp) cross-link spans 1–29 (GLPVCGETCFGGTCNTPGCSCTDPICTRD). 3 disulfide bridges follow: Cys5/Cys19, Cys9/Cys21, and Cys14/Cys26.

Post-translationally, this is a cyclic peptide.

Functionally, probably participates in a plant defense mechanism. The chain is Kalata-B11 from Oldenlandia affinis.